The primary structure comprises 220 residues: Protein-L-isoaspartate O-methyltransferase (220 aa).

Ser65 is an active-site residue.

Belongs to the methyltransferase superfamily. L-isoaspartyl/D-aspartyl protein methyltransferase family.

It is found in the cytoplasm. It carries out the reaction [protein]-L-isoaspartate + S-adenosyl-L-methionine = [protein]-L-isoaspartate alpha-methyl ester + S-adenosyl-L-homocysteine. Catalyzes the methyl esterification of L-isoaspartyl residues in peptides and proteins that result from spontaneous decomposition of normal L-aspartyl and L-asparaginyl residues. It plays a role in the repair and/or degradation of damaged proteins. The polypeptide is Protein-L-isoaspartate O-methyltransferase (Pelodictyon phaeoclathratiforme (strain DSM 5477 / BU-1)).